Here is a 156-residue protein sequence, read N- to C-terminus: MKLNDLRDKPGSVKARKRVGRGIGSGTGKTGGRGVKGQKSRSGVSINGFEGGQMPIYRRLPKRGFTNIFAKSFNVVSLGRIQAAIDAGKLDAKAVVNLDSLKAAGVIRRAKDGVRILSDGELKAKVAFEVAGASKAAVEKIEKAGGSIKLPEAAAE.

Residues 1-11 (MKLNDLRDKPG) show a composition bias toward basic and acidic residues. Residues 1 to 44 (MKLNDLRDKPGSVKARKRVGRGIGSGTGKTGGRGVKGQKSRSGV) form a disordered region. Over residues 21-35 (RGIGSGTGKTGGRGV) the composition is skewed to gly residues.

Belongs to the universal ribosomal protein uL15 family. Part of the 50S ribosomal subunit.

Binds to the 23S rRNA. In Brucella abortus (strain S19), this protein is Large ribosomal subunit protein uL15.